The following is a 313-amino-acid chain: Olfactory receptor 1J2 (313 aa).

The Extracellular portion of the chain corresponds to 1–25; the sequence is MSPENQSSVSEFLLLGLPIRPEQQA. Residue N5 is glycosylated (N-linked (GlcNAc...) asparagine). Residues 26–49 form a helical membrane-spanning segment; sequence VFFTLFLGMYLTTVLGNLLIMLLI. The Cytoplasmic segment spans residues 50 to 57; it reads QLDSHLHT. The helical transmembrane segment at 58–79 threads the bilayer; it reads PMYFFLSHLALTDISFSSVTVP. Residues 80 to 100 lie on the Extracellular side of the membrane; that stretch reads KMLMDMRTKYKSILYEECISQ. The cysteines at positions 97 and 189 are disulfide-linked. A helical transmembrane segment spans residues 101–120; it reads MYFFIFFTDLDSFLITSMAY. The Cytoplasmic portion of the chain corresponds to 121–139; sequence DRYVAICHPLHYTVIMREE. Residues 140–158 form a helical membrane-spanning segment; it reads LCVFLVAVSWILSCASSLS. Topologically, residues 159–196 are extracellular; it reads HTLLLTRLSFCAANTIPHVFCDLAALLKLSCSDIFLNE. A helical membrane pass occupies residues 197–219; that stretch reads LVMFTVGVVVITLPFMCILVSYG. At 220–236 the chain is on the cytoplasmic side; sequence YIGATILRVPSTKGIHK. Residues 237–259 form a helical membrane-spanning segment; sequence ALSTCGSHLSVVSLYYGSIFGQY. At 260-272 the chain is on the extracellular side; sequence LFPTVSSSIDKDV. The helical transmembrane segment at 273–292 threads the bilayer; that stretch reads IVALMYTVVTPMLNPFIYSL. The Cytoplasmic segment spans residues 293 to 313; that stretch reads RNRDMKEALGKLFSRATFFSW.

Belongs to the G-protein coupled receptor 1 family.

The protein resides in the cell membrane. Its function is as follows. Odorant receptor. In Homo sapiens (Human), this protein is Olfactory receptor 1J2 (OR1J2).